The chain runs to 258 residues: C1q-related factor (258 aa).

A signal peptide spans 1–16 (MLLVLVVLIPVLVSSG). Positions 39–120 (GPGAGARSDG…PGSGGSGAIS (82 aa)) are disordered. Over residues 67–77 (GPQGKPGRTGK) the composition is skewed to low complexity. The region spanning 67-115 (GPQGKPGRTGKPGPPGPPGDRGPPGPVGPPGEKGEPGKPGPPGLPGSGG) is the Collagen-like domain. The segment covering 78–95 (PGPPGPPGDRGPPGPVGP) has biased composition (pro residues). A C1q domain is found at 125 to 258 (TTVPRVAFYA…TFSGFIIYSD (134 aa)).

Interacts with ADGRB3. Forms heterooligomers with C1QL4, when proteins are coexpressed; this interaction does not occur after secretion. As to expression, expressed in brainstem. More abundant in areas of the nervous system involved in motor function, such as the Purkinje cells of the cerebellum, the accessory olivary nucleus, the pons and the red nucleus.

It localises to the secreted. In terms of biological role, may regulate the number of excitatory synapses that are formed on hippocampus neurons. Has no effect on inhibitory synapses. The polypeptide is C1q-related factor (C1ql1) (Mus musculus (Mouse)).